An 83-amino-acid chain; its full sequence is Small ribosomal subunit protein bS20 (83 aa).

The tract at residues 60–83 is disordered; it reads ASKGLIHKNKASRDKSRLAAKLAN.

The protein belongs to the bacterial ribosomal protein bS20 family.

Its function is as follows. Binds directly to 16S ribosomal RNA. The chain is Small ribosomal subunit protein bS20 from Streptococcus thermophilus (strain CNRZ 1066).